The following is a 946-amino-acid chain: Serine/arginine repetitive matrix protein 1 (946 aa).

M1 is modified (N-acetylmethionine). Positions 1 to 151 (MDAGFFRGTS…ASLKKQDEDK (151 aa)) are necessary for DNA and RNA-binding. Residues 1-156 (MDAGFFRGTS…QDEDKDKRDK (156 aa)) are necessary for mRNA 3'-end cleavage and cytoplasmic accumulation. R7 carries the post-translational modification Citrulline. The PWI domain maps to 27 to 126 (QLKFAECLEK…AGIPSAFLEL (100 aa)). A Glycyl lysine isopeptide (Lys-Gly) (interchain with G-Cter in SUMO2) cross-link involves residue K127. At K140 the chain carries N6-acetyllysine. A compositionally biased stretch (basic and acidic residues) spans 142–170 (ASLKKQDEDKDKRDKEEKESSREKRERSR). The tract at residues 142 to 946 (ASLKKQDEDK…MRKAQVSPQS (805 aa)) is disordered. Residues 171–207 (SPRRRKSRSPSPRRRSSPVRRERKRSHSRSPRHRTKS) are compositionally biased toward basic residues. The segment covering 214-234 (PEKKEKSPELPEPSVRMKDSS) has biased composition (basic and acidic residues). A phosphoserine mark is found at S220 and S227. K231 is covalently cross-linked (Glycyl lysine isopeptide (Lys-Gly) (interchain with G-Cter in SUMO1); alternate). Residue K231 forms a Glycyl lysine isopeptide (Lys-Gly) (interchain with G-Cter in SUMO2); alternate linkage. A phosphoserine mark is found at S234 and S240. A Phosphothreonine modification is found at T241. Basic and acidic residues predominate over residues 246 to 273 (KAPKPEPVPEPKEPSPEKNSKKEKEKTR). A Glycyl lysine isopeptide (Lys-Gly) (interchain with G-Cter in SUMO2) cross-link involves residue K249. Position 260 is a phosphoserine (S260). Basic residues-rich tracts occupy residues 274 to 327 (PRSR…RTPP) and 334 to 349 (PRHR…RRRS). The segment at 298–707 (RRHRSRSRSY…NKRHSPSPRP (410 aa)) is necessary for speckles and matrix localization. Positions 350–366 (SASLSGSSSSSSSSRSR) are enriched in low complexity. Phosphoserine is present on residues S387, S389, S391, and S400. T404 carries the phosphothreonine modification. Residue S412 is modified to Phosphoserine. T414 carries the post-translational modification Phosphothreonine. Phosphoserine is present on residues S418, S427, S429, and S434. A compositionally biased stretch (polar residues) spans 426-436 (VSVSPGRTSGK). K445 participates in a covalent cross-link: Glycyl lysine isopeptide (Lys-Gly) (interchain with G-Cter in SUMO2). A phosphoserine mark is found at S448 and S450. K457 is covalently cross-linked (Glycyl lysine isopeptide (Lys-Gly) (interchain with G-Cter in SUMO2)). 2 positions are modified to phosphoserine: S461 and S463. K470 participates in a covalent cross-link: Glycyl lysine isopeptide (Lys-Gly) (interchain with G-Cter in SUMO2). Residue S476 is modified to Phosphoserine. The span at 476-499 (SVQQRRQYRRQNQQSSSDSGSSST) shows a compositional bias: low complexity. Basic and acidic residues predominate over residues 501–516 (EDERPKRSHVKNGEVG). S522, S524, S526, S528, S530, S561, S563, S572, and S574 each carry phosphoserine. Over residues 555–572 (SSRRRRSPSPPPARRRRS) the composition is skewed to basic residues. Residues 574-585 (SPAPPPPPPPPP) are compositionally biased toward pro residues. The span at 586-611 (PRRRRSPTPPPRRRTPSPPPRRRSPS) shows a compositional bias: basic residues. Phosphothreonine is present on residues T593 and T600. Position 602 is a phosphoserine (S602). Low complexity predominate over residues 612 to 624 (PRRYSPPIQRRYS). Phosphotyrosine is present on Y615. S616, S624, and S626 each carry phosphoserine. A Phosphothreonine modification is found at T633. Residues S635, S645, S647, S655, and S657 each carry the phosphoserine modification. Positions 640-655 (PKRRASPSPPPKRRVS) are enriched in basic residues. The segment covering 668 to 682 (TKRRSPSLSSKHRKG) has biased composition (basic residues). The span at 704–718 (SPRPRAPQTSSPPPV) shows a compositional bias: pro residues. Residues S713, S714, S723, S725, S731, and S733 each carry the phosphoserine modification. Residues 724–736 (ASPQGRQSPSPST) show a composition bias toward polar residues. Residue T736 is modified to Phosphothreonine. Phosphoserine occurs at positions 779, 781, 789, 793, 795, 797, 810, 814, 816, and 818. Low complexity predominate over residues 779 to 800 (SPSPQSVRRVSSSRSVSGSPEP). A Phosphothreonine modification is found at T819. Residues S822 and S832 each carry the phosphoserine modification. Polar residues predominate over residues 833–842 (PTPSLSPARN). The residue at position 834 (T834) is a Phosphothreonine. Residues S836, S838, and S843 each carry the phosphoserine modification. Positions 850–875 (KKKKKKKDKKHKKDKKHKKHKKHKKE) are enriched in basic residues. Low complexity predominate over residues 878-907 (VTIATPATAAPAAVSAATTTSAQEEPAAAP). T913 bears the Phosphothreonine mark. S915 is subject to Phosphoserine. A compositionally biased stretch (basic and acidic residues) spans 924 to 934 (DLERHLREKAL). S943 bears the Phosphoserine mark.

It belongs to the splicing factor SR family. Identified in the spliceosome C complex. Found in a pre-mRNA splicing complex with SFRS4, SFRS5, SNRP70, SNRPA1, SRRM1 and SRRM2. Component of the minor spliceosome, which splices U12-type introns. Found in a pre-mRNA exonic splicing enhancer (ESE) complex with SNRP70, SNRPA1, SRRM1 and TRA2B/SFRS10. Found in a mRNA splicing-dependent exon junction complex (EJC) with DEK, PRPF8, NCBP1, RBM8A, RNPS1, SRRM1 and ALYREF/THOC4. Interacts with DDX39B, CPSF1, RBM8A, RNPS1, and ALYREF/THOC4. Seems to be a compound of RNA export complexes that are released from speckles in a ATP-dependent manner. Post-translationally, citrullinated by PADI4. Phosphorylated on multiple serine and threonine residues by DYRK3 during the G2-to-M transition, after the nuclear-envelope breakdown. Phosphorylation by DYRK3 promotes disassembly of nuclear speckles.

Its subcellular location is the nucleus matrix. It localises to the nucleus speckle. Functionally, part of pre- and post-splicing multiprotein mRNP complexes. As a component of the minor spliceosome, involved in the splicing of U12-type introns in pre-mRNAs. Involved in numerous pre-mRNA processing events. Promotes constitutive and exonic splicing enhancer (ESE)-dependent splicing activation by bridging together sequence-specific (SR family proteins, SFRS4, SFRS5 and TRA2B/SFRS10) and basal snRNP (SNRP70 and SNRPA1) factors of the spliceosome. Stimulates mRNA 3'-end cleavage independently of the formation of an exon junction complex. Binds both pre-mRNA and spliced mRNA 20-25 nt upstream of exon-exon junctions. Binds RNA and DNA with low sequence specificity and has similar preference for either double- or single-stranded nucleic acid substrates. This chain is Serine/arginine repetitive matrix protein 1 (Srrm1), found in Mus musculus (Mouse).